Reading from the N-terminus, the 765-residue chain is Zinc transporter ZIP6 (765 aa).

An N-terminal signal peptide occupies residues 1 to 20 (MATDLSVIMILTFALWVTSP). Topologically, residues 21–335 (LHELQSTAAF…PKTYSLQIAW (315 aa)) are extracellular. Residue Asn68 is glycosylated (N-linked (GlcNAc...) asparagine). Composition is skewed to basic and acidic residues over residues 96-135 (DHEH…DHEH) and 174-186 (RPAE…RNIK). 2 disordered regions span residues 96 to 196 (DHEH…EVTS) and 209 to 257 (VETI…SEPR). Residues 187–196 (ESASSSEVTS) are compositionally biased toward low complexity. Polar residues predominate over residues 224-233 (VNPSTPPSIT). Over residues 238 to 247 (VGRLSRLARK) the composition is skewed to basic residues. The span at 248-257 (KSNESVSEPR) shows a compositional bias: basic and acidic residues. N-linked (GlcNAc...) asparagine glycosylation is found at Asn250, Asn275, and Asn292. Residues 336 to 356 (LGGFIAISIISFLSLLGVILV) form a helical membrane-spanning segment. The Cytoplasmic portion of the chain corresponds to 357–365 (PLMNRVFFK). The helical transmembrane segment at 366 to 386 (FLLSFLVALAVGTLSGDALLH) threads the bilayer. Residues 387–433 (LLPHSHASHQHSHSHEEPAMEMKRGPLFSHLSAQNIEESSYFDSTWK) lie on the Extracellular side of the membrane. Residues 434-454 (GLTALGGLYFMFLVEHVLTLI) traverse the membrane as a helical segment. Residues 455 to 667 (KQFKDKKKKN…LKAGMTVKQA (213 aa)) are Cytoplasmic-facing. The disordered stretch occupies residues 458 to 519 (KDKKKKNQKK…EPSPFDSQQP (62 aa)). Positions 475–495 (ESKKQLSKYDSQLSSNEEKVD) form a coiled coil. A phosphoserine mark is found at Ser481 and Ser488. The span at 490-508 (NEEKVDPGERPESYLRADS) shows a compositional bias: basic and acidic residues. Over residues 509–519 (QEPSPFDSQQP) the composition is skewed to polar residues. Residues 668 to 688 (VLYNALSAMLAYLGMATGIFI) form a helical membrane-spanning segment. Over 689–696 (GHYAENVS) the chain is Extracellular. The N-linked (GlcNAc...) asparagine glycan is linked to Asn694. Residues 697 to 717 (MWIFALTAGLFMYVALVDMVP) form a helical membrane-spanning segment. The Cytoplasmic segment spans residues 718–734 (EMLHNDASDHGCSRWGY). A helical membrane pass occupies residues 735–755 (FFLQNAGILLGFGIMLLISIF). The Extracellular segment spans residues 756–765 (EHKIVFRINF).

The protein belongs to the ZIP transporter (TC 2.A.5) family. As to quaternary structure, interacts with SLC39A10; which triggers cells to undergo EMT and mitosis. Found in a complex with SLC39A6, SLC39A10 and with the 'Ser-727' phosphorylated form of STAT3 throughout mitosis. Found in a complex with SLC39A6, SLC39A10 and with NCAM1; this complex controls NCAM1 phosphorylation and integration into focal adhesion complexes during epithelial-to-mesenchymal transition (EMT). Found in a complex with SLC39A6, SLC39A10 and with GSK3B that controls NCAM1 phosphorylation. Cleaved on the N-terminus before locating to the plasma membrane. In terms of processing, N-glycosylated. Post-translationally, phosphorylated by ZAP70 in response to TCR stimulation leading to its activation. Highly expressed in the brain and testis. In the brain strongly expressed in the CA1 and CA3 regions, Purkinje cells in cerebellum and dentate gyrus in hippocampus. In testis found in spermatids or mature sperms in the central areas of seminiferous tubules.

The protein localises to the cell membrane. It localises to the cell projection. It is found in the lamellipodium membrane. The protein resides in the membrane raft. Its subcellular location is the apical cell membrane. The enzyme catalyses Zn(2+)(in) = Zn(2+)(out). Functionally, zinc-influx transporter which plays a role in zinc homeostasis and in the induction of epithelial-to-mesenchymal transition (EMT). When associated with SLC39A10, the heterodimer formed by SLC39A10 and SLC39A6 mediates cellular zinc uptake to trigger cells to undergo epithelial- to-mesenchymal transition (EMT). The SLC39A10-SLC39A6 heterodimer also controls NCAM1 phosphorylation and its integration into focal adhesion complexes during EMT. Zinc influx inactivates GSK3B, enabling unphosphorylated SNAI1 in the nucleus to down-regulate adherence genes such as E-cadherin, causing loss of cell adherence. In addition, the SLC39A10-SLC39A6 heterodimer plays an essentiel role in initiating mitosis by importing zinc into cells to initiate a pathway resulting in the onset of mitosis. Participates in the T-cell receptor signaling regulation by mediating cellular zinc uptake into activated lymphocytes. Regulates the zinc influx necessary for proper meiotic progression to metaphase II (MII) that allows the oocyte-to-egg transition. This Mus musculus (Mouse) protein is Zinc transporter ZIP6.